The sequence spans 241 residues: Lactate utilization protein C (241 aa).

The protein belongs to the LutC/YkgG family.

Its function is as follows. Is involved in L-lactate degradation and allows cells to grow with lactate as the sole carbon source. The polypeptide is Lactate utilization protein C (Geobacillus sp. (strain WCH70)).